The sequence spans 380 residues: Mitogen-activated protein kinase 3 (380 aa).

Position 2 is an N-acetylalanine (A2). Residues 43–331 (YTQLQYIGEG…VEEALAHPYL (289 aa)) form the Protein kinase domain. Residues 49–57 (IGEGAYGMV) and K72 contribute to the ATP site. The Proton acceptor role is filled by D167. Residue T199 is modified to Phosphothreonine. Phosphothreonine; by MAP2K1 and MAP2K2 is present on T203. The TXY signature appears at 203 to 205 (TEY). Y205 is modified (phosphotyrosine; by MAP2K1 and MAP2K2). Residue T208 is modified to Phosphothreonine; by autocatalysis.

This sequence belongs to the protein kinase superfamily. CMGC Ser/Thr protein kinase family. MAP kinase subfamily. Binds both upstream activators and downstream substrates in multimolecular complexes. Found in a complex with at least BRAF, HRAS, MAP2K1/MEK1, MAPK3 and RGS14. Interacts with TPR. Interacts with ADAM15, ARRB2, CANX, DAPK1 (via death domain), HSF4, IER3, MAP2K1/MEK1, NISCH, and SGK1. Interacts with MORG1. Interacts with PEA15. Interacts with isoform 1 of MKNK2 and this binding prevents from dephosphorylation and inactivation. Interacts with CDKN2AIP. Interacts with HSF1 (via D domain and preferentially with hyperphosphorylated form); this interaction occurs upon heat shock. Interacts with CAVIN4. Interacts with GIT1; this interaction is necessary for MAPK3 localization to focal adhesions. Interacts with ZNF263. Interacts with EBF4. It depends on Mg(2+) as a cofactor. Post-translationally, dually phosphorylated on Thr-203 and Tyr-205, which activates the enzyme. Ligand-activated ALK induces tyrosine phosphorylation. Dephosphorylated by PTPRJ at Tyr-205. Autophosphorylated on threonine and tyrosine residues in vitro. Phosphorylated upon FLT3 and KIT signaling. In terms of processing, ubiquitinated by TRIM15 via 'Lys-63'-linked ubiquitination; leading to activation. Deubiquitinated by CYLD.

It localises to the cytoplasm. The protein resides in the nucleus. Its subcellular location is the membrane. It is found in the caveola. The protein localises to the cell junction. It localises to the focal adhesion. The catalysed reaction is L-seryl-[protein] + ATP = O-phospho-L-seryl-[protein] + ADP + H(+). The enzyme catalyses L-threonyl-[protein] + ATP = O-phospho-L-threonyl-[protein] + ADP + H(+). Phosphorylated by MAP2K1/MEK1 and MAP2K2/MEK2 on Thr-203 and Tyr-205 in response to external stimuli like insulin or NGF. Both phosphorylations are required for activity. This phosphorylation causes dramatic conformational changes, which enable full activation and interaction of MAPK1/ERK2 with its substrates. Dephosphorylated and inactivated by DUSP3, DUSP6 and DUSP9. In terms of biological role, serine/threonine kinase which acts as an essential component of the MAP kinase signal transduction pathway. MAPK1/ERK2 and MAPK3/ERK1 are the 2 MAPKs which play an important role in the MAPK/ERK cascade. They participate also in a signaling cascade initiated by activated KIT and KITLG/SCF. Depending on the cellular context, the MAPK/ERK cascade mediates diverse biological functions such as cell growth, adhesion, survival and differentiation through the regulation of transcription, translation, cytoskeletal rearrangements. The MAPK/ERK cascade also plays a role in initiation and regulation of meiosis, mitosis, and postmitotic functions in differentiated cells by phosphorylating a number of transcription factors. About 160 substrates have already been discovered for ERKs. Many of these substrates are localized in the nucleus, and seem to participate in the regulation of transcription upon stimulation. However, other substrates are found in the cytosol as well as in other cellular organelles, and those are responsible for processes such as translation, mitosis and apoptosis. Moreover, the MAPK/ERK cascade is also involved in the regulation of the endosomal dynamics, including lysosome processing and endosome cycling through the perinuclear recycling compartment (PNRC); as well as in the fragmentation of the Golgi apparatus during mitosis. The substrates include transcription factors (such as ATF2, BCL6, ELK1, ERF, FOS, HSF4 or SPZ1), cytoskeletal elements (such as CANX, CTTN, GJA1, MAP2, MAPT, PXN, SORBS3 or STMN1), regulators of apoptosis (such as BAD, BTG2, CASP9, DAPK1, IER3, MCL1 or PPARG), regulators of translation (such as EIF4EBP1) and a variety of other signaling-related molecules (like ARHGEF2, DEPTOR, FRS2 or GRB10). Protein kinases (such as RAF1, RPS6KA1/RSK1, RPS6KA3/RSK2, RPS6KA2/RSK3, RPS6KA6/RSK4, SYK, MKNK1/MNK1, MKNK2/MNK2, RPS6KA5/MSK1, RPS6KA4/MSK2, MAPKAPK3 or MAPKAPK5) and phosphatases (such as DUSP1, DUSP4, DUSP6 or DUSP16) are other substrates which enable the propagation the MAPK/ERK signal to additional cytosolic and nuclear targets, thereby extending the specificity of the cascade. The chain is Mitogen-activated protein kinase 3 (Mapk3) from Mus musculus (Mouse).